The sequence spans 348 residues: 11-beta-hydroxysteroid dehydrogenase A (348 aa).

Residues 10–30 form a helical; Signal-anchor for type II membrane protein membrane-spanning segment; the sequence is LIAPPFTFFFLLFFLPPFQIF. Positions 13 to 26 match the Proline-knob motif; that stretch reads PPFTFFFLLFFLPP. Residues 54-80, Asp105, and 132-135 each bind NADP(+); these read GASSGIGESLAYEYAKRGACLVLAARR and NAGI. Ser184 is a substrate binding site. The active-site Proton acceptor is Tyr197. NADP(+)-binding positions include 197-201 and Lys201; that span reads YNASK.

Belongs to the short-chain dehydrogenases/reductases (SDR) family. As to expression, expressed in seeds (at protein level). Not expressed in stem, leaf or root (at protein level).

The protein resides in the lipid droplet. Its subcellular location is the membrane. It catalyses the reaction an 11beta-hydroxysteroid + NADP(+) = an 11-oxosteroid + NADPH + H(+). The enzyme catalyses an 11beta-hydroxysteroid + NAD(+) = an 11-oxosteroid + NADH + H(+). It carries out the reaction corticosterone + NADP(+) = 11-dehydrocorticosterone + NADPH + H(+). The catalysed reaction is corticosterone + NAD(+) = 11-dehydrocorticosterone + NADH + H(+). It catalyses the reaction 17beta-estradiol + NADP(+) = estrone + NADPH + H(+). The enzyme catalyses 17beta-estradiol + NAD(+) = estrone + NADH + H(+). Has dehydrogenase activity against corticosterone (11 beta-hydroxysteroid) and estradiol (17 beta-hydroxysteroid), with higher activity against estradiol. Possesses higher dehydrogenase activity with NADP(+) than NAD(+) regardless of the sterol substrate. May be involved in signal transduction regulated by various sterols. The chain is 11-beta-hydroxysteroid dehydrogenase A from Sesamum indicum (Oriental sesame).